Here is a 453-residue protein sequence, read N- to C-terminus: UPF0210 protein Pcar_2119 (453 aa).

The protein belongs to the UPF0210 family. In terms of assembly, homodimer.

This chain is UPF0210 protein Pcar_2119, found in Syntrophotalea carbinolica (strain DSM 2380 / NBRC 103641 / GraBd1) (Pelobacter carbinolicus).